A 336-amino-acid polypeptide reads, in one-letter code: Fructose-1,6-bisphosphatase class 1 (336 aa).

Positions 91, 114, 116, and 117 each coordinate Mg(2+). Substrate contacts are provided by residues 117-120, Asn-210, Tyr-243, and Lys-273; that span reads DGSS. Mg(2+) is bound at residue Glu-279.

It belongs to the FBPase class 1 family. As to quaternary structure, homotetramer. Mg(2+) serves as cofactor.

The protein resides in the cytoplasm. It carries out the reaction beta-D-fructose 1,6-bisphosphate + H2O = beta-D-fructose 6-phosphate + phosphate. It participates in carbohydrate biosynthesis; gluconeogenesis. In Dichelobacter nodosus (strain VCS1703A), this protein is Fructose-1,6-bisphosphatase class 1.